The sequence spans 130 residues: Mediator of RNA polymerase II transcription subunit 10 (130 aa).

Belongs to the Mediator complex subunit 10 family. In terms of assembly, component of the Mediator complex.

The protein localises to the nucleus. Functionally, component of the Mediator complex, a coactivator involved in the regulated transcription of nearly all RNA polymerase II-dependent genes. Mediator functions as a bridge to convey information from gene-specific regulatory proteins to the basal RNA polymerase II transcription machinery. Mediator is recruited to promoters by direct interactions with regulatory proteins and serves as a scaffold for the assembly of a functional preinitiation complex with RNA polymerase II and the general transcription factors. This chain is Mediator of RNA polymerase II transcription subunit 10 (MED10), found in Anopheles gambiae (African malaria mosquito).